The primary structure comprises 61 residues: Small ribosomal subunit protein uS14 (61 aa).

Zn(2+) is bound by residues Cys24, Cys27, Cys40, and Cys43.

The protein belongs to the universal ribosomal protein uS14 family. Zinc-binding uS14 subfamily. As to quaternary structure, part of the 30S ribosomal subunit. Contacts proteins S3 and S10. Zn(2+) is required as a cofactor.

Its function is as follows. Binds 16S rRNA, required for the assembly of 30S particles and may also be responsible for determining the conformation of the 16S rRNA at the A site. The protein is Small ribosomal subunit protein uS14 of Geobacter sp. (strain M21).